Consider the following 378-residue polypeptide: tRNA (guanine(37)-N(1))-methyltransferase (378 aa).

S-adenosyl-L-methionine-binding positions include H196, 234–235 (DL), 262–263 (DA), and N282.

This sequence belongs to the class I-like SAM-binding methyltransferase superfamily. TRM5/TYW2 family. In terms of assembly, monomer.

It is found in the mitochondrion matrix. The protein localises to the nucleus. Its subcellular location is the cytoplasm. The catalysed reaction is guanosine(37) in tRNA + S-adenosyl-L-methionine = N(1)-methylguanosine(37) in tRNA + S-adenosyl-L-homocysteine + H(+). In terms of biological role, specifically methylates the N1 position of guanosine-37 in various cytoplasmic and mitochondrial tRNAs. Methylation is not dependent on the nature of the nucleoside 5' of the target nucleoside. This is the first step in the biosynthesis of wybutosine (yW), a modified base adjacent to the anticodon of tRNAs and required for accurate decoding. The chain is tRNA (guanine(37)-N(1))-methyltransferase from Trichomonas vaginalis (strain ATCC PRA-98 / G3).